The chain runs to 342 residues: C-X-C chemokine receptor type 6 (342 aa).

At 1–32 the chain is on the extracellular side; it reads MAEHDYHEDYGFNSFNDSSQEEHQDFLQFSKV. An N-linked (GlcNAc...) asparagine glycan is attached at Asn-16. A helical transmembrane segment spans residues 33 to 59; it reads FLPCMYLVVFVCGLVGNSLVLVISIFY. The Cytoplasmic portion of the chain corresponds to 60–68; it reads HKLQSLTDV. The helical transmembrane segment at 69–89 threads the bilayer; that stretch reads FLVNLPLADLVFVCTLPFWAY. Topologically, residues 90-103 are extracellular; the sequence is AGIHEWVFGQVMCK. An intrachain disulfide couples Cys-102 to Cys-180. A helical transmembrane segment spans residues 104–125; sequence SLLGIYTINFYTSMLILTCITV. Topologically, residues 126 to 143 are cytoplasmic; sequence DRFIVVVKATKAYNQQAK. Residues 144-164 traverse the membrane as a helical segment; sequence RMTWGKVTSLLIWVISLLVSL. Residues 165-187 lie on the Extracellular side of the membrane; the sequence is PQIIYGNVFNLDKLICGYHDEAI. A helical transmembrane segment spans residues 188 to 215; it reads STVVLATQMTLGFFLPLLTMIVCYSVII. The Cytoplasmic segment spans residues 216–231; the sequence is KTLLHAGGFQKHRSLK. A helical membrane pass occupies residues 232 to 259; sequence IIFLVMAVFLLTQMPFNLMKLIRSTHWE. At 260–275 the chain is on the extracellular side; sequence YYAMTSFHYTIMVTEA. Residues 276 to 293 traverse the membrane as a helical segment; sequence IAYLRACLNPVLYAFVSL. The Cytoplasmic segment spans residues 294-342; sequence KFRKNFWKLVKDIGCLPYLGVSHQWKSSEDNSKTFSASHNVEATSMFQL.

Belongs to the G-protein coupled receptor 1 family.

The protein resides in the cell membrane. In terms of biological role, receptor for the C-X-C chemokine CXCL16. Used as a coreceptor by SIVs and by strains of HIV-2 and m-tropic HIV-1. The protein is C-X-C chemokine receptor type 6 (CXCR6) of Pan troglodytes (Chimpanzee).